We begin with the raw amino-acid sequence, 426 residues long: Arrestin domain-containing protein 17 (426 aa).

Over residues 320-329 (QSAGNGSLPK) the composition is skewed to polar residues. The tract at residues 320 to 340 (QSAGNGSLPKSSIKDSPPKWD) is disordered. Over residues 331–340 (SIKDSPPKWD) the composition is skewed to basic and acidic residues.

The protein belongs to the arrestin family. Interacts with tax-6. Post-translationally, phosphorylated. Dephosphorylated by tax-6 in vitro. In terms of tissue distribution, expressed from the comma stage to adulthood in the nervous system, including sensory neurons and interneurons posterior to the nerve ring, dorsal and ventral nerve cords, tail ganglia and, CEP, HSN, ASK, ADL, ASH and ASJ neurons.

Functionally, involved in several behavioral responses including chemotaxis towards lysine and adaptation to repeated osmotic stress. In addition, plays a role in resuming egg-laying and locomotion after starvation. The polypeptide is Arrestin domain-containing protein 17 (Caenorhabditis elegans).